Here is a 616-residue protein sequence, read N- to C-terminus: GPI mannosyltransferase 3 (616 aa).

The Cytoplasmic portion of the chain corresponds to 1-16; sequence MAHEVHRIKPKLGRTQ. A helical transmembrane segment spans residues 17-37; the sequence is IFWVFLAFRVLNAVLTRTFFQ. Residues 38-86 lie on the Lumenal side of the membrane; the sequence is ADEFWQALEPAHWKAFKYGELTWEWKFGVRSYLFPMIFELTYRLVSLSS. A helical transmembrane segment spans residues 87–107; sequence ILLHYALLLLSTIGSDLLILL. Residues 108-136 lie on the Cytoplasmic side of the membrane; it reads LPKYELSWQVAEDLKRLPFDVTRSFEYYG. A helical transmembrane segment spans residues 137 to 157; it reads VIYAPKIVMAVLASIGEYYIV. The Lumenal segment spans residues 158–188; it reads RFVQKLYLLTLDKRNEKEEEERRSGLSEITK. The chain crosses the membrane as a helical span at residues 189–209; sequence FALLLSLTNFFNCFFITRTFI. Over 210 to 240 the chain is Cytoplasmic; sequence NSFEMILTSIALYYWDWTGGQMIKESSFTKS. The helical transmembrane segment at 241–261 threads the bilayer; sequence LIFAFLACLQRPSSGLIWVIP. Over 262–278 the chain is Lumenal; that stretch reads SISLILNLVGKKQYHLL. The helical transmembrane segment at 279–299 threads the bilayer; that stretch reads FITFSKVLRSFFLVFTANAII. Residues 300–338 are Cytoplasmic-facing; sequence DMYFYEKVTFPFFRFLKFNFTTPLSKFYGVAPWHFHFFQ. The chain crosses the membrane as a helical span at residues 339–359; it reads SLPIVLGASIPAFAFGLFFPL. Topologically, residues 360 to 392 are lumenal; that stretch reads SKRSFPKKYLNPFFQVKLTILLNLLVYSTLPHK. Residues 393–413 traverse the membrane as a helical segment; it reads EFRFIFPLQPLFILISSFGLL. The Cytoplasmic portion of the chain corresponds to 414 to 423; the sequence is RLDRDYWKRL. The helical transmembrane segment at 424–444 threads the bilayer; sequence SGLKSLLWLVPFVSVFIALLL. Residues 445–616 are Lumenal-facing; the sequence is DTFHESGSIE…DYSDIPAADI (172 aa).

The protein belongs to the glycosyltransferase 22 family. PIGB subfamily.

Its subcellular location is the endoplasmic reticulum membrane. It participates in glycolipid biosynthesis; glycosylphosphatidylinositol-anchor biosynthesis. In terms of biological role, mannosyltransferase involved in glycosylphosphatidylinositol-anchor biosynthesis. Transfers the third mannose to Man2-GlcN-acyl-PI during GPI precursor assembly. This is GPI mannosyltransferase 3 (GPI10) from Saccharomyces cerevisiae (strain ATCC 204508 / S288c) (Baker's yeast).